The sequence spans 176 residues: Peptide methionine sulfoxide reductase MsrA (176 aa).

The active site involves C12.

The protein belongs to the MsrA Met sulfoxide reductase family.

The catalysed reaction is L-methionyl-[protein] + [thioredoxin]-disulfide + H2O = L-methionyl-(S)-S-oxide-[protein] + [thioredoxin]-dithiol. The enzyme catalyses [thioredoxin]-disulfide + L-methionine + H2O = L-methionine (S)-S-oxide + [thioredoxin]-dithiol. In terms of biological role, has an important function as a repair enzyme for proteins that have been inactivated by oxidation. Catalyzes the reversible oxidation-reduction of methionine sulfoxide in proteins to methionine. The sequence is that of Peptide methionine sulfoxide reductase MsrA from Thermus thermophilus (strain ATCC 27634 / DSM 579 / HB8).